The following is a 450-amino-acid chain: 23S rRNA (uracil(1939)-C(5))-methyltransferase RlmD (450 aa).

Residues 1–62 enclose the TRAM domain; it reads MPVAGPLEIV…PSYEQATLVD (62 aa). Residues cysteine 75, cysteine 81, cysteine 84, and cysteine 163 each contribute to the [4Fe-4S] cluster site. The S-adenosyl-L-methionine site is built by glutamine 271, phenylalanine 300, asparagine 305, glutamate 321, asparagine 349, and aspartate 370. The Nucleophile role is filled by cysteine 406.

This sequence belongs to the class I-like SAM-binding methyltransferase superfamily. RNA M5U methyltransferase family. RlmD subfamily.

It catalyses the reaction uridine(1939) in 23S rRNA + S-adenosyl-L-methionine = 5-methyluridine(1939) in 23S rRNA + S-adenosyl-L-homocysteine + H(+). Its function is as follows. Catalyzes the formation of 5-methyl-uridine at position 1939 (m5U1939) in 23S rRNA. The polypeptide is 23S rRNA (uracil(1939)-C(5))-methyltransferase RlmD (Ralstonia nicotianae (strain ATCC BAA-1114 / GMI1000) (Ralstonia solanacearum)).